The following is a 261-amino-acid chain: Adenosylcobinamide-GDP ribazoletransferase (261 aa).

The next 5 helical transmembrane spans lie at 12–32 (NLFFVAMSFFTRIPVPSWVVI), 46–66 (LVGLLIGLICALVFWLAQLIL), 67–87 (PASIAILLAMVAGVLVTGAFH), 120–140 (GALSLGLVLLLKWQLLVELAL), and 199–219 (IFVLLWLNGVAAFVLFITLWL).

Belongs to the CobS family. It depends on Mg(2+) as a cofactor.

Its subcellular location is the cell inner membrane. It catalyses the reaction alpha-ribazole + adenosylcob(III)inamide-GDP = adenosylcob(III)alamin + GMP + H(+). The catalysed reaction is alpha-ribazole 5'-phosphate + adenosylcob(III)inamide-GDP = adenosylcob(III)alamin 5'-phosphate + GMP + H(+). It functions in the pathway cofactor biosynthesis; adenosylcobalamin biosynthesis; adenosylcobalamin from cob(II)yrinate a,c-diamide: step 7/7. In terms of biological role, joins adenosylcobinamide-GDP and alpha-ribazole to generate adenosylcobalamin (Ado-cobalamin). Also synthesizes adenosylcobalamin 5'-phosphate from adenosylcobinamide-GDP and alpha-ribazole 5'-phosphate. The protein is Adenosylcobinamide-GDP ribazoletransferase of Shewanella frigidimarina (strain NCIMB 400).